A 447-amino-acid chain; its full sequence is Dihydroorotase (447 aa).

Zn(2+) contacts are provided by H84 and H86. Residues 86–88 (HLR) and N118 contribute to the substrate site. The Zn(2+) site is built by D174, H201, and H255. N301 contributes to the substrate binding site. Residue D328 participates in Zn(2+) binding. The active site involves D328. Residues H332 and 346-347 (FG) each bind substrate.

Belongs to the metallo-dependent hydrolases superfamily. DHOase family. Class I DHOase subfamily. Requires Zn(2+) as cofactor.

The enzyme catalyses (S)-dihydroorotate + H2O = N-carbamoyl-L-aspartate + H(+). The protein operates within pyrimidine metabolism; UMP biosynthesis via de novo pathway; (S)-dihydroorotate from bicarbonate: step 3/3. Functionally, catalyzes the reversible cyclization of carbamoyl aspartate to dihydroorotate. In Anaplasma phagocytophilum (strain HZ), this protein is Dihydroorotase.